Reading from the N-terminus, the 444-residue chain is Glutamyl-tRNA reductase (444 aa).

Residues 49–52, Ser-109, 114–116, and Gln-120 each bind substrate; these read TCNR and ETQ. The active-site Nucleophile is the Cys-50. 189–194 contacts NADP(+); the sequence is GAGKMG.

The protein belongs to the glutamyl-tRNA reductase family. In terms of assembly, homodimer.

The enzyme catalyses (S)-4-amino-5-oxopentanoate + tRNA(Glu) + NADP(+) = L-glutamyl-tRNA(Glu) + NADPH + H(+). The protein operates within porphyrin-containing compound metabolism; protoporphyrin-IX biosynthesis; 5-aminolevulinate from L-glutamyl-tRNA(Glu): step 1/2. Functionally, catalyzes the NADPH-dependent reduction of glutamyl-tRNA(Glu) to glutamate 1-semialdehyde (GSA). In Bacillus cereus (strain 03BB102), this protein is Glutamyl-tRNA reductase.